The chain runs to 371 residues: Protein MxiG (371 aa).

A helical membrane pass occupies residues 127-141 (VFFFFAVIVVLIIIF).

The protein localises to the cell inner membrane. Its subcellular location is the cell outer membrane. Functionally, involved in the secretion of the Ipa antigens. Involved in the intracellular dissemination of Shigella. Part of the Mxi-Spa secretion apparatus. The protein is Protein MxiG (mxiG) of Shigella flexneri.